The chain runs to 351 residues: Nuclear inhibitor of protein phosphatase 1 (351 aa).

The segment at 1–142 (MAAAANSGSS…LPSAVKGDEK (142 aa)) is interaction with CDC5L, SF3B1 and MELK. An FHA domain is found at 49–101 (YLFGRNPDLCDFTIDHQSCSRVHAALVYHKHLKRVFLIDLNSTHGTFLGHIRL). The interval 143–224 (MGGEDDELKG…VDPSVGRFRN (82 aa)) is interaction with EED. Threonine 161 is subject to Phosphothreonine. A phosphoserine mark is found at serine 178 and serine 199. Short sequence motifs (nuclear localization signal) lie at residues 185 to 209 (GNLD…DDEI) and 210 to 240 (INPE…RVEG). Positions 191 to 200 (RPKRKRKNSR) are involved in PP-1 inhibition. Positions 200 to 203 (RVTF) are involved in PP-1 binding. The residue at position 204 (serine 204) is a Phosphoserine. A Phosphoserine modification is found at serine 249. The residue at position 264 (tyrosine 264) is a Phosphotyrosine; by LYN; in vitro. Positions 310-329 (AVNMNPAPNPAVYNPEAVNE) are interaction with EED. Residues 316-351 (APNPAVYNPEAVNEPKKKKYAKEAWPGKKPTPSLLI) form a disordered region. An RNA-binding region spans residues 330–351 (PKKKKYAKEAWPGKKPTPSLLI). Residues 331-337 (KKKKYAK) form an involved in PP-1 inhibition region. Residue tyrosine 335 is modified to Phosphotyrosine.

In terms of assembly, interacts with phosphorylated CDC5L, SF3B1 and MELK. Interacts with EED, in a nucleic acid-stimulated manner. Part of a complex consisting of PPP1R8, EED, HDAC2 and PP-1. Part of the spliceosome. Interacts with PPP1CA, PPP1CB and PPP1CC. Requires Mg(2+) as cofactor. Post-translationally, may be inactivated by phosphorylation on Ser-199 or Ser-204. Phosphorylated by Lyn in vitro on Tyr-264, and also on Tyr-335 in the presence of RNA. Ubiquitously expressed, with highest levels in heart and skeletal muscle, followed by brain, placenta, lung, liver and pancreas. Less abundant in kidney. The concentration and ratio between isoforms is cell-type dependent. Isoform Alpha (&gt;90%) and isoform Beta were found in brain, heart and kidney. Isoform Gamma is mainly found in B-cells and T-lymphocytes, and has been found in 293 embryonic kidney cells.

Its subcellular location is the nucleus. It is found in the nucleus speckle. The protein resides in the cytoplasm. In terms of biological role, inhibitor subunit of the major nuclear protein phosphatase-1 (PP-1). It has RNA-binding activity but does not cleave RNA and may target PP-1 to RNA-associated substrates. May also be involved in pre-mRNA splicing. Binds DNA and might act as a transcriptional repressor. Seems to be required for cell proliferation. Isoform Gamma is a site-specific single-strand endoribonuclease that cleaves single strand RNA 3' to purines and pyrimidines in A+U-rich regions. It generates 5'-phosphate termini at the site of cleavage. This isoform does not inhibit PP-1. May be implicated in mRNA splicing. The sequence is that of Nuclear inhibitor of protein phosphatase 1 (PPP1R8) from Homo sapiens (Human).